The primary structure comprises 294 residues: 4-diphosphocytidyl-2-C-methyl-D-erythritol kinase (294 aa).

Residue K15 is part of the active site. 101-111 (PSEAGLGGGSS) contributes to the ATP binding site. Residue D143 is part of the active site.

It belongs to the GHMP kinase family. IspE subfamily.

It catalyses the reaction 4-CDP-2-C-methyl-D-erythritol + ATP = 4-CDP-2-C-methyl-D-erythritol 2-phosphate + ADP + H(+). It participates in isoprenoid biosynthesis; isopentenyl diphosphate biosynthesis via DXP pathway; isopentenyl diphosphate from 1-deoxy-D-xylulose 5-phosphate: step 3/6. Catalyzes the phosphorylation of the position 2 hydroxy group of 4-diphosphocytidyl-2C-methyl-D-erythritol. This chain is 4-diphosphocytidyl-2-C-methyl-D-erythritol kinase, found in Fusobacterium nucleatum subsp. nucleatum (strain ATCC 25586 / DSM 15643 / BCRC 10681 / CIP 101130 / JCM 8532 / KCTC 2640 / LMG 13131 / VPI 4355).